The sequence spans 347 residues: Protein RecA (347 aa).

An ATP-binding site is contributed by glycine 70–threonine 77.

The protein belongs to the RecA family.

The protein localises to the cytoplasm. Its function is as follows. Can catalyze the hydrolysis of ATP in the presence of single-stranded DNA, the ATP-dependent uptake of single-stranded DNA by duplex DNA, and the ATP-dependent hybridization of homologous single-stranded DNAs. It interacts with LexA causing its activation and leading to its autocatalytic cleavage. This is Protein RecA from Ruegeria pomeroyi (strain ATCC 700808 / DSM 15171 / DSS-3) (Silicibacter pomeroyi).